The chain runs to 398 residues: MKKITILGSTGSIGTQTLDIVQQYPDQFQVVGLATRNNGELLAQQIKQFRPEIVAICQESQLNTIKDAIASLDYSPILLTGEAGVVEVARYGDSESVVTGIVGCAGLLPTIAAIEAGKDIALANKETLIAGGPVVLPLVEKHGVKLLPADSEHSAIFQCLQGVPKGGLRRIILTASGGAFRDWPVEQLKFVTVEDAIKHPNWSMGRKITVDSATLMNKGLEVIEAHYLFGLEYDKIDIVIHPQSIIHSLIELQDTSVLAQLGWPDMRLPLLYALSWPERIYTDWEPLDLVKAGSFTFREPDHHKYPCMQLAYAAGRSGGAIPAVLNAANEQAVALFLEEKIAFLEIPKLIEMACDRFTNQNTSTPTLEDILEADRWARQEVIKGSQEIAKGNKIMSLT.

NADPH is bound by residues threonine 10, glycine 11, serine 12, isoleucine 13, asparagine 38, and asparagine 124. Lysine 125 contacts 1-deoxy-D-xylulose 5-phosphate. An NADPH-binding site is contributed by glutamate 126. Aspartate 150 contacts Mn(2+). The 1-deoxy-D-xylulose 5-phosphate site is built by serine 151, glutamate 152, serine 176, and histidine 199. Position 152 (glutamate 152) interacts with Mn(2+). Residue glycine 205 participates in NADPH binding. 1-deoxy-D-xylulose 5-phosphate-binding residues include serine 212, asparagine 217, lysine 218, and glutamate 221. A Mn(2+)-binding site is contributed by glutamate 221.

The protein belongs to the DXR family. Mg(2+) serves as cofactor. Mn(2+) is required as a cofactor.

It catalyses the reaction 2-C-methyl-D-erythritol 4-phosphate + NADP(+) = 1-deoxy-D-xylulose 5-phosphate + NADPH + H(+). It functions in the pathway isoprenoid biosynthesis; isopentenyl diphosphate biosynthesis via DXP pathway; isopentenyl diphosphate from 1-deoxy-D-xylulose 5-phosphate: step 1/6. Functionally, catalyzes the NADPH-dependent rearrangement and reduction of 1-deoxy-D-xylulose-5-phosphate (DXP) to 2-C-methyl-D-erythritol 4-phosphate (MEP). The sequence is that of 1-deoxy-D-xylulose 5-phosphate reductoisomerase from Rippkaea orientalis (strain PCC 8801 / RF-1) (Cyanothece sp. (strain PCC 8801)).